Consider the following 600-residue polypeptide: Probable translation initiation factor IF-2 (600 aa).

One can recognise a tr-type G domain in the interval 13 to 228 (LRTPIVAVLG…VLMGLAQRYM (216 aa)). The tract at residues 22-29 (GHVDHGKT) is G1. 22–29 (GHVDHGKT) contacts GTP. The G2 stretch occupies residues 47-51 (AITQH). The segment at 84–87 (DTPG) is G3. GTP contacts are provided by residues 84-88 (DTPGH) and 138-141 (NKID). The interval 138 to 141 (NKID) is G4. The tract at residues 140-162 (IDTTPGWNPNPDAPVQGTYDDQS) is disordered. The tract at residues 206–208 (SAE) is G5.

It belongs to the TRAFAC class translation factor GTPase superfamily. Classic translation factor GTPase family. IF-2 subfamily.

Its function is as follows. Function in general translation initiation by promoting the binding of the formylmethionine-tRNA to ribosomes. Seems to function along with eIF-2. The sequence is that of Probable translation initiation factor IF-2 from Halobacterium salinarum (strain ATCC 700922 / JCM 11081 / NRC-1) (Halobacterium halobium).